The primary structure comprises 158 residues: MTDRIPMTPEGYEKLKEELDRLIKIERPAIIKAIAEARAHGDLSENAEYHAAREKQSFIEGRIQELQAKLARAYVIDPSKINQNKVAFGAKVRVIDIDTEEEKEFHLVGPDEADVKNGKISITSPVGKALIGKEVGEQVTIKAPAKTFNYEIISISFE.

The stretch at 47-73 (AEYHAAREKQSFIEGRIQELQAKLARA) forms a coiled coil.

This sequence belongs to the GreA/GreB family.

Functionally, necessary for efficient RNA polymerase transcription elongation past template-encoded arresting sites. The arresting sites in DNA have the property of trapping a certain fraction of elongating RNA polymerases that pass through, resulting in locked ternary complexes. Cleavage of the nascent transcript by cleavage factors such as GreA or GreB allows the resumption of elongation from the new 3'terminus. GreA releases sequences of 2 to 3 nucleotides. The protein is Transcription elongation factor GreA of Thermodesulfovibrio yellowstonii (strain ATCC 51303 / DSM 11347 / YP87).